The sequence spans 202 residues: NADH-quinone oxidoreductase subunit C (202 aa).

Belongs to the complex I 30 kDa subunit family. As to quaternary structure, NDH-1 is composed of 14 different subunits. Subunits NuoB, C, D, E, F, and G constitute the peripheral sector of the complex.

The protein localises to the cell inner membrane. The enzyme catalyses a quinone + NADH + 5 H(+)(in) = a quinol + NAD(+) + 4 H(+)(out). Functionally, NDH-1 shuttles electrons from NADH, via FMN and iron-sulfur (Fe-S) centers, to quinones in the respiratory chain. The immediate electron acceptor for the enzyme in this species is believed to be ubiquinone. Couples the redox reaction to proton translocation (for every two electrons transferred, four hydrogen ions are translocated across the cytoplasmic membrane), and thus conserves the redox energy in a proton gradient. The sequence is that of NADH-quinone oxidoreductase subunit C from Bartonella quintana (strain Toulouse) (Rochalimaea quintana).